A 435-amino-acid polypeptide reads, in one-letter code: 3-phosphoshikimate 1-carboxyvinyltransferase (435 aa).

Residues lysine 22, serine 23, and arginine 27 each coordinate 3-phosphoshikimate. Position 22 (lysine 22) interacts with phosphoenolpyruvate. Phosphoenolpyruvate contacts are provided by glycine 94 and arginine 122. 3-phosphoshikimate is bound by residues serine 166, glutamine 168, aspartate 314, and lysine 341. Residue glutamine 168 coordinates phosphoenolpyruvate. Aspartate 314 serves as the catalytic Proton acceptor. Residues arginine 345 and arginine 388 each coordinate phosphoenolpyruvate.

Belongs to the EPSP synthase family. As to quaternary structure, monomer.

The protein resides in the cytoplasm. It carries out the reaction 3-phosphoshikimate + phosphoenolpyruvate = 5-O-(1-carboxyvinyl)-3-phosphoshikimate + phosphate. It participates in metabolic intermediate biosynthesis; chorismate biosynthesis; chorismate from D-erythrose 4-phosphate and phosphoenolpyruvate: step 6/7. Functionally, catalyzes the transfer of the enolpyruvyl moiety of phosphoenolpyruvate (PEP) to the 5-hydroxyl of shikimate-3-phosphate (S3P) to produce enolpyruvyl shikimate-3-phosphate and inorganic phosphate. In Ruthia magnifica subsp. Calyptogena magnifica, this protein is 3-phosphoshikimate 1-carboxyvinyltransferase.